Reading from the N-terminus, the 302-residue chain is Sulfate adenylyltransferase subunit 2 (302 aa).

The tract at residues 280–302 (RQGRLIDSDQSASMEQKKRQGYF) is disordered.

It belongs to the PAPS reductase family. CysD subfamily. Heterodimer composed of CysD, the smaller subunit, and CysN.

It catalyses the reaction sulfate + ATP + H(+) = adenosine 5'-phosphosulfate + diphosphate. The protein operates within sulfur metabolism; hydrogen sulfide biosynthesis; sulfite from sulfate: step 1/3. Functionally, with CysN forms the ATP sulfurylase (ATPS) that catalyzes the adenylation of sulfate producing adenosine 5'-phosphosulfate (APS) and diphosphate, the first enzymatic step in sulfur assimilation pathway. APS synthesis involves the formation of a high-energy phosphoric-sulfuric acid anhydride bond driven by GTP hydrolysis by CysN coupled to ATP hydrolysis by CysD. The chain is Sulfate adenylyltransferase subunit 2 from Shewanella baltica (strain OS223).